A 321-amino-acid polypeptide reads, in one-letter code: o-succinylbenzoate synthase (321 aa).

Catalysis depends on lysine 134, which acts as the Proton donor. Positions 162, 191, and 214 each coordinate Mg(2+). The active-site Proton acceptor is lysine 236.

Belongs to the mandelate racemase/muconate lactonizing enzyme family. MenC type 1 subfamily. A divalent metal cation serves as cofactor.

The catalysed reaction is (1R,6R)-6-hydroxy-2-succinyl-cyclohexa-2,4-diene-1-carboxylate = 2-succinylbenzoate + H2O. The protein operates within quinol/quinone metabolism; 1,4-dihydroxy-2-naphthoate biosynthesis; 1,4-dihydroxy-2-naphthoate from chorismate: step 4/7. Its pathway is quinol/quinone metabolism; menaquinone biosynthesis. In terms of biological role, converts 2-succinyl-6-hydroxy-2,4-cyclohexadiene-1-carboxylate (SHCHC) to 2-succinylbenzoate (OSB). The protein is o-succinylbenzoate synthase of Enterobacter sp. (strain 638).